Consider the following 1437-residue polypeptide: MGARASVLSGGELDKWEKIRLRPGGKKKYKLKHIVWASRELERFAVNPGLLETSEGCRQILGQLQPSLQTGSEELRSLYNTVATLYCVHQRIDVKDTKEALEKIEEEQNKSKKKAQQAAAAAGTGNSSQVSQNYPIVQNLQGQMVHQAISPRTLNAWVKVVEEKAFSPEVIPMFSALSEGATPQDLNTMLNTVGGHQAAMQMLKETINEEAAEWDRVHPVHAGPIAPGQMREPRGSDIAGTTSTLQEQIGWMTNNPPIPVGEIYKRWIILGLNKIVRMYSPTSILDIRQGPKEPFRDYVDRFYKTLRAEQASQDVKNWMTETLLVQNANPDCKTILKALGPAATLEEMMTACQGVGGPGHKARVLAEAMSQVTNPANIMMQRGNFRNQRKTVKCFNCGKEGHIAKNCRAPRKKGCWRCGREGHQMKDCTERQANFLREDLAFLQGKAREFSSEQTRANSPTRRELQVWGGENNSLSEAGADRQGTVSFNFPQITLWQRPLVTIRIGGQLKEALLDTGADDTVLEEMNLPGKWKPKMIGGIGGFIKVRQYDQIPVEICGHKAIGTVLVGPTPVNIIGRNLLTQIGCTLNFPISPIETVPVKLKPGMDGPKVKQWPLTEEKIKALVEICTEMEKEGKISKIGPENPYNTPVFAIKKKDSTKWRKLVDFRELNKRTQDFWEVQLGIPHPAGLKKKKSVTVLDVGDAYFSVPLDKDFRKYTAFTIPSINNETPGIRYQYNVLPQGWKGSPAIFQSSMTKILEPFRKQNPDIVIYQYMDDLYVGSDLEIGQHRTKIEELRQHLLRWGFTTPDKKHQKEPPFLWMGYELHPDKWTVQPIMLPEKDSWTVNDIQKLVGKLNWASQIYAGIKVKQLCKLLRGTKALTEVIPLTEEAELELAENREILKEPVHEVYYDPSKDLVAEIQKQGQGQWTYQIYQEPFKNLKTGKYARMRGAHTNDVKQLTEAVQKVSTESIVIWGKIPKFKLPIQKETWEAWWMEYWQATWIPEWEFVNTPPLVKLWYQLEKEPIVGAETFYVDGAANRETKLGKAGYVTDRGRQKVVSIADTTNQKTELQAIHLALQDSGLEVNIVTDSQYALGIIQAQPDKSESELVSQIIEQLIKKEKVYLAWVPAHKGIGGNEQVDKLVSAGIRKVLFLNGIDKAQEEHEKYHSNWRAMASDFNLPPVVAKEIVASCDKCQLKGEAMHGQVDCSPGIWQLDCTHLEGKIILVAVHVASGYIEAEVIPAETGQETAYFLLKLAGRWPVKTIHTDNGSNFTSTTVKAACWWAGIKQEFGIPYNPQSQGVVESMNNELKKIIGQVRDQAEHLKTAVQMAVFIHNFKRKGGIGGYSAGERIVDIIATDIQTKELQKQITKIQNFRVYYRDNKDPLWKGPAKLLWKGEGAVVIQDNSDIKVVPRRKAKIIRDYGKQMAGDDCVASRQDED.

The N-myristoyl glycine; by host moiety is linked to residue G2. Residues 7–31 (VLSGGELDKWEKIRLRPGGKKKYKL) are interaction with Gp41. An interaction with host CALM1 region spans residues 8 to 43 (LSGGELDKWEKIRLRPGGKKKYKLKHIVWASRELER). Residues 12–19 (ELDKWEKI) form an interaction with host AP3D1 region. The segment at 14–33 (DKWEKIRLRPGGKKKYKLKH) is interaction with membrane phosphatidylinositol 4,5-bisphosphate and RNA. Positions 16–22 (WEKIRLR) match the Nuclear export signal motif. The Nuclear localization signal signature appears at 26–32 (KKKYKLK). Positions 73–77 (EELRS) are interaction with membrane phosphatidylinositol 4,5-bisphosphate. Residues 106–129 (EEQNKSKKKAQQAAAAAGTGNSSQ) form a disordered region. The residue at position 134 (Y134) is a Phosphotyrosine; by host. The interaction with human PPIA/CYPA and NUP153 stretch occupies residues 191–229 (NTVGGHQAAMQMLKETINEEAAEWDRVHPVHAGPIAPGQ). A dimerization/Multimerization of capsid protein p24 region spans residues 279–365 (YSPTSILDIR…GGPGHKARVL (87 aa)). 2 CCHC-type zinc fingers span residues 392–409 (VKCF…NCRA) and 413–430 (KGCW…DCTE). Residues 491–495 (PQITL) form a dimerization of protease region. In terms of domain architecture, Peptidase A2 spans 510–579 (KEALLDTGAD…TPVNIIGRNL (70 aa)). The active-site For protease activity; shared with dimeric partner is the D515. 2 dimerization of protease regions span residues 539–545 (GIGGFIK) and 578–590 (NLLT…LNFP). Residues 633-823 (EGKISKIGPE…PPFLWMGYEL (191 aa)) form the Reverse transcriptase domain. Residues D699, D774, and D775 each coordinate Mg(2+). Residues 816–824 (FLWMGYELH) form an RT 'primer grip' region. The Tryptophan repeat motif motif lies at 987–1003 (WEAWWMEYWQATWIPEW). The region spanning 1023 to 1146 (IVGAETFYVD…VDKLVSAGIR (124 aa)) is the RNase H type-1 domain. Residues D1032, E1067, D1087, and D1138 each coordinate Mg(2+). Residues 1152–1193 (NGIDKAQEEHEKYHSNWRAMASDFNLPPVVAKEIVASCDKCQ) form an Integrase-type zinc finger. 4 residues coordinate Zn(2+): H1161, H1165, C1189, and C1192. The region spanning 1203–1353 (VDCSPGIWQL…SAGERIVDII (151 aa)) is the Integrase catalytic domain. Residues D1213, D1265, and E1301 each coordinate Mg(2+). A DNA-binding region (integrase-type) is located at residues 1372 to 1419 (FRVYYRDNKDPLWKGPAKLLWKGEGAVVIQDNSDIKVVPRRKAKIIRD).

Homotrimer; further assembles as hexamers of trimers. Interacts with gp41 (via C-terminus). Interacts with host CALM1; this interaction induces a conformational change in the Matrix protein, triggering exposure of the myristate group. Interacts with host AP3D1; this interaction allows the polyprotein trafficking to multivesicular bodies during virus assembly. Part of the pre-integration complex (PIC) which is composed of viral genome, matrix protein, Vpr and integrase. In terms of assembly, homodimer; the homodimer further multimerizes as homohexamers or homopentamers. Interacts with human PPIA/CYPA; This interaction stabilizes the capsid. Interacts with human NUP153. Interacts with host PDZD8; this interaction stabilizes the capsid. Interacts with monkey TRIM5; this interaction destabilizes the capsid. As to quaternary structure, homodimer, whose active site consists of two apposed aspartic acid residues. Heterodimer of p66 RT and p51 RT (RT p66/p51). Heterodimerization of RT is essential for DNA polymerase activity. The overall folding of the subdomains is similar in p66 RT and p51 RT but the spatial arrangements of the subdomains are dramatically different. In terms of assembly, homotetramer; may further associate as a homohexadecamer. Part of the pre-integration complex (PIC) which is composed of viral genome, matrix protein, Vpr and integrase. Interacts with human SMARCB1/INI1 and human PSIP1/LEDGF isoform 1. Interacts with human KPNA3; this interaction might play a role in nuclear import of the pre-integration complex. Interacts with human NUP153; this interaction might play a role in nuclear import of the pre-integration complex. Mg(2+) is required as a cofactor. In terms of processing, specific enzymatic cleavages by the viral protease yield mature proteins. The protease is released by autocatalytic cleavage. The polyprotein is cleaved during and after budding, this process is termed maturation. Proteolytic cleavage of p66 RT removes the RNase H domain to yield the p51 RT subunit. Nucleocapsid protein p7 might be further cleaved after virus entry. Post-translationally, tyrosine phosphorylated presumably in the virion by a host kinase. Phosphorylation is apparently not a major regulator of membrane association. Phosphorylated possibly by host MAPK1; this phosphorylation is necessary for Pin1-mediated virion uncoating. In terms of processing, methylated by host PRMT6, impairing its function by reducing RNA annealing and the initiation of reverse transcription.

The protein localises to the host cell membrane. The protein resides in the host endosome. Its subcellular location is the host multivesicular body. It localises to the virion membrane. It is found in the host nucleus. The protein localises to the host cytoplasm. The protein resides in the virion. It catalyses the reaction Specific for a P1 residue that is hydrophobic, and P1' variable, but often Pro.. The enzyme catalyses Endohydrolysis of RNA in RNA/DNA hybrids. Three different cleavage modes: 1. sequence-specific internal cleavage of RNA. Human immunodeficiency virus type 1 and Moloney murine leukemia virus enzymes prefer to cleave the RNA strand one nucleotide away from the RNA-DNA junction. 2. RNA 5'-end directed cleavage 13-19 nucleotides from the RNA end. 3. DNA 3'-end directed cleavage 15-20 nucleotides away from the primer terminus.. It carries out the reaction 3'-end directed exonucleolytic cleavage of viral RNA-DNA hybrid.. The catalysed reaction is DNA(n) + a 2'-deoxyribonucleoside 5'-triphosphate = DNA(n+1) + diphosphate. With respect to regulation, protease: The viral protease is inhibited by many synthetic protease inhibitors (PIs), such as amprenavir, atazanavir, indinavir, loprinavir, nelfinavir, ritonavir and saquinavir. Use of protease inhibitors in tritherapy regimens permit more ambitious therapeutic strategies. Reverse transcriptase/ribonuclease H: RT can be inhibited either by nucleoside RT inhibitors (NRTIs) or by non nucleoside RT inhibitors (NNRTIs). NRTIs act as chain terminators, whereas NNRTIs inhibit DNA polymerization by binding a small hydrophobic pocket near the RT active site and inducing an allosteric change in this region. Classical NRTIs are abacavir, adefovir (PMEA), didanosine (ddI), lamivudine (3TC), stavudine (d4T), tenofovir (PMPA), zalcitabine (ddC), and zidovudine (AZT). Classical NNRTIs are atevirdine (BHAP U-87201E), delavirdine, efavirenz (DMP-266), emivirine (I-EBU), and nevirapine (BI-RG-587). The tritherapies used as a basic effective treatment of AIDS associate two NRTIs and one NNRTI. Functionally, mediates, with Gag polyprotein, the essential events in virion assembly, including binding the plasma membrane, making the protein-protein interactions necessary to create spherical particles, recruiting the viral Env proteins, and packaging the genomic RNA via direct interactions with the RNA packaging sequence (Psi). Gag-Pol polyprotein may regulate its own translation, by the binding genomic RNA in the 5'-UTR. At low concentration, the polyprotein would promote translation, whereas at high concentration, the polyprotein would encapsidate genomic RNA and then shut off translation. Its function is as follows. Targets the polyprotein to the plasma membrane via a multipartite membrane-binding signal, that includes its myristoylated N-terminus. Matrix protein is part of the pre-integration complex. Implicated in the release from host cell mediated by Vpu. Binds to RNA. Forms the conical core that encapsulates the genomic RNA-nucleocapsid complex in the virion. Most core are conical, with only 7% tubular. The core is constituted by capsid protein hexamer subunits. The core is disassembled soon after virion entry. Host restriction factors such as TRIM5-alpha or TRIMCyp bind retroviral capsids and cause premature capsid disassembly, leading to blocks in reverse transcription. Capsid restriction by TRIM5 is one of the factors which restricts HIV-1 to the human species. Host PIN1 apparently facilitates the virion uncoating. On the other hand, interactions with PDZD8 or CYPA stabilize the capsid. In terms of biological role, encapsulates and protects viral dimeric unspliced genomic RNA (gRNA). Binds these RNAs through its zinc fingers. Acts as a nucleic acid chaperone which is involved in rearangement of nucleic acid secondary structure during gRNA retrotranscription. Also facilitates template switch leading to recombination. As part of the polyprotein, participates in gRNA dimerization, packaging, tRNA incorporation and virion assembly. Functionally, aspartyl protease that mediates proteolytic cleavages of Gag and Gag-Pol polyproteins during or shortly after the release of the virion from the plasma membrane. Cleavages take place as an ordered, step-wise cascade to yield mature proteins. This process is called maturation. Displays maximal activity during the budding process just prior to particle release from the cell. Also cleaves Nef and Vif, probably concomitantly with viral structural proteins on maturation of virus particles. Hydrolyzes host EIF4GI and PABP1 in order to shut off the capped cellular mRNA translation. The resulting inhibition of cellular protein synthesis serves to ensure maximal viral gene expression and to evade host immune response. Also mediates cleavage of host YTHDF3. Mediates cleavage of host CARD8, thereby activating the CARD8 inflammasome, leading to the clearance of latent HIV-1 in patient CD4(+) T-cells after viral reactivation; in contrast, HIV-1 can evade CARD8-sensing when its protease remains inactive in infected cells prior to viral budding. Its function is as follows. Multifunctional enzyme that converts the viral RNA genome into dsDNA in the cytoplasm, shortly after virus entry into the cell. This enzyme displays a DNA polymerase activity that can copy either DNA or RNA templates, and a ribonuclease H (RNase H) activity that cleaves the RNA strand of RNA-DNA heteroduplexes in a partially processive 3' to 5' endonucleasic mode. Conversion of viral genomic RNA into dsDNA requires many steps. A tRNA(3)-Lys binds to the primer-binding site (PBS) situated at the 5'-end of the viral RNA. RT uses the 3' end of the tRNA primer to perform a short round of RNA-dependent minus-strand DNA synthesis. The reading proceeds through the U5 region and ends after the repeated (R) region which is present at both ends of viral RNA. The portion of the RNA-DNA heteroduplex is digested by the RNase H, resulting in a ssDNA product attached to the tRNA primer. This ssDNA/tRNA hybridizes with the identical R region situated at the 3' end of viral RNA. This template exchange, known as minus-strand DNA strong stop transfer, can be either intra- or intermolecular. RT uses the 3' end of this newly synthesized short ssDNA to perform the RNA-dependent minus-strand DNA synthesis of the whole template. RNase H digests the RNA template except for two polypurine tracts (PPTs) situated at the 5'-end and near the center of the genome. It is not clear if both polymerase and RNase H activities are simultaneous. RNase H probably can proceed both in a polymerase-dependent (RNA cut into small fragments by the same RT performing DNA synthesis) and a polymerase-independent mode (cleavage of remaining RNA fragments by free RTs). Secondly, RT performs DNA-directed plus-strand DNA synthesis using the PPTs that have not been removed by RNase H as primers. PPTs and tRNA primers are then removed by RNase H. The 3' and 5' ssDNA PBS regions hybridize to form a circular dsDNA intermediate. Strand displacement synthesis by RT to the PBS and PPT ends produces a blunt ended, linear dsDNA copy of the viral genome that includes long terminal repeats (LTRs) at both ends. Catalyzes viral DNA integration into the host chromosome, by performing a series of DNA cutting and joining reactions. This enzyme activity takes place after virion entry into a cell and reverse transcription of the RNA genome in dsDNA. The first step in the integration process is 3' processing. This step requires a complex comprising the viral genome, matrix protein, Vpr and integrase. This complex is called the pre-integration complex (PIC). The integrase protein removes 2 nucleotides from each 3' end of the viral DNA, leaving recessed CA OH's at the 3' ends. In the second step, the PIC enters cell nucleus. This process is mediated through integrase and Vpr proteins, and allows the virus to infect a non dividing cell. This ability to enter the nucleus is specific of lentiviruses, other retroviruses cannot and rely on cell division to access cell chromosomes. In the third step, termed strand transfer, the integrase protein joins the previously processed 3' ends to the 5' ends of strands of target cellular DNA at the site of integration. The 5'-ends are produced by integrase-catalyzed staggered cuts, 5 bp apart. A Y-shaped, gapped, recombination intermediate results, with the 5'-ends of the viral DNA strands and the 3' ends of target DNA strands remaining unjoined, flanking a gap of 5 bp. The last step is viral DNA integration into host chromosome. This involves host DNA repair synthesis in which the 5 bp gaps between the unjoined strands are filled in and then ligated. Since this process occurs at both cuts flanking the HIV genome, a 5 bp duplication of host DNA is produced at the ends of HIV-1 integration. Alternatively, Integrase may catalyze the excision of viral DNA just after strand transfer, this is termed disintegration. This chain is Gag-Pol polyprotein (gag-pol), found in Human immunodeficiency virus type 1 group M subtype B (isolate ARV2/SF2) (HIV-1).